The primary structure comprises 704 residues: Glycine--tRNA ligase beta subunit (704 aa).

It belongs to the class-II aminoacyl-tRNA synthetase family. In terms of assembly, tetramer of two alpha and two beta subunits.

The protein localises to the cytoplasm. It carries out the reaction tRNA(Gly) + glycine + ATP = glycyl-tRNA(Gly) + AMP + diphosphate. This Rhizobium etli (strain ATCC 51251 / DSM 11541 / JCM 21823 / NBRC 15573 / CFN 42) protein is Glycine--tRNA ligase beta subunit.